A 445-amino-acid polypeptide reads, in one-letter code: uncharacterized protein (445 aa).

Residues T139 to Q160 form a disordered region.

This is an uncharacterized protein from Mycoplasma pneumoniae (strain ATCC 29342 / M129 / Subtype 1) (Mycoplasmoides pneumoniae).